A 248-amino-acid chain; its full sequence is Triosephosphate isomerase (248 aa).

Asn-9 to Lys-11 contributes to the substrate binding site. His-94 serves as the catalytic Electrophile. Glu-166 serves as the catalytic Proton acceptor. Substrate-binding positions include Gly-172, Ser-212, and Gly-233–Gly-234.

The protein belongs to the triosephosphate isomerase family. Homodimer.

The protein localises to the cytoplasm. The catalysed reaction is D-glyceraldehyde 3-phosphate = dihydroxyacetone phosphate. The protein operates within carbohydrate biosynthesis; gluconeogenesis. Its pathway is carbohydrate degradation; glycolysis; D-glyceraldehyde 3-phosphate from glycerone phosphate: step 1/1. In terms of biological role, involved in the gluconeogenesis. Catalyzes stereospecifically the conversion of dihydroxyacetone phosphate (DHAP) to D-glyceraldehyde-3-phosphate (G3P). The polypeptide is Triosephosphate isomerase (Alkaliphilus metalliredigens (strain QYMF)).